The following is a 179-amino-acid chain: ATP synthase subunit delta (179 aa).

This sequence belongs to the ATPase delta chain family. F-type ATPases have 2 components, F(1) - the catalytic core - and F(0) - the membrane proton channel. F(1) has five subunits: alpha(3), beta(3), gamma(1), delta(1), epsilon(1). F(0) has three main subunits: a(1), b(2) and c(10-14). The alpha and beta chains form an alternating ring which encloses part of the gamma chain. F(1) is attached to F(0) by a central stalk formed by the gamma and epsilon chains, while a peripheral stalk is formed by the delta and b chains.

Its subcellular location is the cell membrane. In terms of biological role, f(1)F(0) ATP synthase produces ATP from ADP in the presence of a proton or sodium gradient. F-type ATPases consist of two structural domains, F(1) containing the extramembraneous catalytic core and F(0) containing the membrane proton channel, linked together by a central stalk and a peripheral stalk. During catalysis, ATP synthesis in the catalytic domain of F(1) is coupled via a rotary mechanism of the central stalk subunits to proton translocation. Its function is as follows. This protein is part of the stalk that links CF(0) to CF(1). It either transmits conformational changes from CF(0) to CF(1) or is implicated in proton conduction. The protein is ATP synthase subunit delta of Ureaplasma parvum serovar 3 (strain ATCC 27815 / 27 / NCTC 11736).